A 255-amino-acid polypeptide reads, in one-letter code: tRNA (guanine-N(1)-)-methyltransferase (255 aa).

Residues G113 and I133 to L138 contribute to the S-adenosyl-L-methionine site.

It belongs to the RNA methyltransferase TrmD family. In terms of assembly, homodimer.

It is found in the cytoplasm. The catalysed reaction is guanosine(37) in tRNA + S-adenosyl-L-methionine = N(1)-methylguanosine(37) in tRNA + S-adenosyl-L-homocysteine + H(+). Its function is as follows. Specifically methylates guanosine-37 in various tRNAs. The protein is tRNA (guanine-N(1)-)-methyltransferase of Escherichia coli O6:K15:H31 (strain 536 / UPEC).